Consider the following 428-residue polypeptide: Serine--tRNA ligase (428 aa).

An L-serine-binding site is contributed by 231–233 (TAE). 262-264 (RSE) lines the ATP pocket. Glu-285 lines the L-serine pocket. 349 to 352 (EISS) is a binding site for ATP. Position 385 (Ser-385) interacts with L-serine.

It belongs to the class-II aminoacyl-tRNA synthetase family. Type-1 seryl-tRNA synthetase subfamily. Homodimer. The tRNA molecule binds across the dimer.

Its subcellular location is the cytoplasm. The catalysed reaction is tRNA(Ser) + L-serine + ATP = L-seryl-tRNA(Ser) + AMP + diphosphate + H(+). The enzyme catalyses tRNA(Sec) + L-serine + ATP = L-seryl-tRNA(Sec) + AMP + diphosphate + H(+). It functions in the pathway aminoacyl-tRNA biosynthesis; selenocysteinyl-tRNA(Sec) biosynthesis; L-seryl-tRNA(Sec) from L-serine and tRNA(Sec): step 1/1. Catalyzes the attachment of serine to tRNA(Ser). Is also able to aminoacylate tRNA(Sec) with serine, to form the misacylated tRNA L-seryl-tRNA(Sec), which will be further converted into selenocysteinyl-tRNA(Sec). The chain is Serine--tRNA ligase from Staphylococcus aureus (strain MSSA476).